The sequence spans 332 residues: DNA-directed RNA polymerase subunit alpha (332 aa).

An alpha N-terminal domain (alpha-NTD) region spans residues 1–226; it reads MLIAQRPTLT…ELFGLARELN (226 aa). Residues 243–332 form an alpha C-terminal domain (alpha-CTD) region; the sequence is LSSELSMPIE…GYDEDESTTI (90 aa).

This sequence belongs to the RNA polymerase alpha chain family. In terms of assembly, homodimer. The RNAP catalytic core consists of 2 alpha, 1 beta, 1 beta' and 1 omega subunit. When a sigma factor is associated with the core the holoenzyme is formed, which can initiate transcription.

The enzyme catalyses RNA(n) + a ribonucleoside 5'-triphosphate = RNA(n+1) + diphosphate. Its function is as follows. DNA-dependent RNA polymerase catalyzes the transcription of DNA into RNA using the four ribonucleoside triphosphates as substrates. In Leifsonia xyli subsp. xyli (strain CTCB07), this protein is DNA-directed RNA polymerase subunit alpha.